We begin with the raw amino-acid sequence, 102 residues long: Small integral membrane protein 29 (102 aa).

An N-linked (GlcNAc...) asparagine glycan is attached at N3. The helical transmembrane segment at 21 to 41 (VLGPFFLITLVGVVVAVVMYV) threads the bilayer.

It localises to the membrane. In Mus musculus (Mouse), this protein is Small integral membrane protein 29.